A 365-amino-acid polypeptide reads, in one-letter code: MYKNMNSHELIEESNNSGTPATKSSSKPTKKIRPRNDLVHYSKALSKVLRHTAKANGLQIREDGYIEVDSILKLPQFRGMGMELLLSIVKGNDKKRFTMEEVEGVLYIRANQGHSIKAVQVPMARIDNASSIPKVVHGTKKELWPVISKQGLSRMKRNHIHCATGLYGDPGVISGIRKSCTLYIYIDSAKAMQDGVEFYRSENGVILTEGVNGLLSSKYFSRVETSDGEVLLDAKASPKNNRSDESDQSDPESIDPFCDNLQALSMHELELLEEKHSNFGYSEGIIKGKMQVAQSGFDDGFKHGSRLGFQMGKTIGTLKAKLYIFEENEQMEILKQELDRLQESAEFHIFVANHKEEILKCIREK.

Disordered regions lie at residues 1 to 35 and 231 to 254; these read MYKN…IRPR and LLDA…PESI. The span at 17-27 shows a compositional bias: low complexity; sequence SGTPATKSSSK.

It belongs to the KptA/TPT1 family.

It catalyses the reaction 2'-phospho-[ligated tRNA] + NAD(+) = mature tRNA + ADP-alpha-D-ribose 1'',2''-cyclic phosphate + nicotinamide. Its function is as follows. Catalyzes the last step of tRNA splicing, the transfer of the splice junction 2'-phosphate from ligated tRNA to NAD to produce ADP-ribose 1''-2'' cyclic phosphate. This chain is Putative tRNA 2'-phosphotransferase, found in Schizosaccharomyces pombe (strain 972 / ATCC 24843) (Fission yeast).